We begin with the raw amino-acid sequence, 264 residues long: Hemin import ATP-binding protein HmuV (264 aa).

Positions 2-241 constitute an ABC transporter domain; it reads IEVSGVSVRL…ETMLAVFGCA (240 aa). 34–41 provides a ligand contact to ATP; it reads GPNGSGKT.

The protein belongs to the ABC transporter superfamily. Heme (hemin) importer (TC 3.A.1.14.5) family. As to quaternary structure, the complex is composed of two ATP-binding proteins (HmuV), two transmembrane proteins (HmuU) and a solute-binding protein (HmuT).

The protein resides in the cell inner membrane. Functionally, part of the ABC transporter complex HmuTUV involved in hemin import. Responsible for energy coupling to the transport system. The protein is Hemin import ATP-binding protein HmuV of Rhizobium johnstonii (strain DSM 114642 / LMG 32736 / 3841) (Rhizobium leguminosarum bv. viciae).